The chain runs to 67 residues: Light-harvesting protein B-870 alpha chain (67 aa).

Residues 1-12 (MWRIWRLFDPMR) are Cytoplasmic-facing. Residues 13–33 (AMVAQAVFLLGLAVLIHLMLL) form a helical membrane-spanning segment. His29 provides a ligand contact to a bacteriochlorophyll. Residues 34 to 67 (GTNKYNWLDGAKKAPVATAVAPVPAEVTSLAQAK) are Periplasmic-facing.

Belongs to the antenna complex alpha subunit family. As to quaternary structure, an alpha/beta heterodimer. The core complex is formed by different alpha and beta chains, binding bacteriochlorophyll molecules, and arranged most probably in tetrameric structures disposed around the reaction center. The non-pigmented gamma chains may constitute additional components.

The protein localises to the cell inner membrane. Functionally, antenna complexes are light-harvesting systems, which transfer the excitation energy to the reaction centers. This chain is Light-harvesting protein B-870 alpha chain (pufA), found in Rubrivivax gelatinosus (strain NBRC 100245 / IL144).